A 700-amino-acid chain; its full sequence is Phosphoribosylformylglycinamidine synthase subunit PurL (700 aa).

Histidine 34 is a catalytic residue. Tyrosine 37 provides a ligand contact to ATP. A Mg(2+)-binding site is contributed by glutamate 79. Residues serine 80–histidine 83 and arginine 102 each bind substrate. Histidine 81 acts as the Proton acceptor in catalysis. Mg(2+) is bound at residue aspartate 103. Glutamine 227 is a binding site for substrate. Aspartate 255 is a Mg(2+) binding site. Glutamate 299 to glutamine 301 is a binding site for substrate. Aspartate 476 and glycine 513 together coordinate ATP. Asparagine 514 provides a ligand contact to Mg(2+). Serine 516 contacts substrate.

Belongs to the FGAMS family. As to quaternary structure, monomer. Part of the FGAM synthase complex composed of 1 PurL, 1 PurQ and 2 PurS subunits.

The protein resides in the cytoplasm. It carries out the reaction N(2)-formyl-N(1)-(5-phospho-beta-D-ribosyl)glycinamide + L-glutamine + ATP + H2O = 2-formamido-N(1)-(5-O-phospho-beta-D-ribosyl)acetamidine + L-glutamate + ADP + phosphate + H(+). It functions in the pathway purine metabolism; IMP biosynthesis via de novo pathway; 5-amino-1-(5-phospho-D-ribosyl)imidazole from N(2)-formyl-N(1)-(5-phospho-D-ribosyl)glycinamide: step 1/2. Its function is as follows. Part of the phosphoribosylformylglycinamidine synthase complex involved in the purines biosynthetic pathway. Catalyzes the ATP-dependent conversion of formylglycinamide ribonucleotide (FGAR) and glutamine to yield formylglycinamidine ribonucleotide (FGAM) and glutamate. The FGAM synthase complex is composed of three subunits. PurQ produces an ammonia molecule by converting glutamine to glutamate. PurL transfers the ammonia molecule to FGAR to form FGAM in an ATP-dependent manner. PurS interacts with PurQ and PurL and is thought to assist in the transfer of the ammonia molecule from PurQ to PurL. The chain is Phosphoribosylformylglycinamidine synthase subunit PurL from Halobacterium salinarum (strain ATCC 29341 / DSM 671 / R1).